The sequence spans 2193 residues: Genome polyprotein (2193 aa).

The segment at 1–22 (MGSQVSTQRSGSHENSNSATEG) is disordered. The N-myristoyl glycine; by host moiety is linked to residue Gly-2. The Cytoplasmic portion of the chain corresponds to 2–1503 (GSQVSTQRSG…HLNRAVLVMQ (1502 aa)). The interval 568 to 588 (RVADVIESSIGDSVSRALTQA) is amphipathic alpha-helix. Catalysis depends on for protease 2A activity residues His-883 and Asp-901. The Zn(2+) site is built by Cys-918 and Cys-920. Catalysis depends on Cys-972, which acts as the For protease 2A activity. Positions 978 and 980 each coordinate Zn(2+). Positions 1216–1374 (EKRMNNYMQF…SKTDLGRLDA (159 aa)) constitute an SF3 helicase domain. 1240–1247 (GSPGTGKS) contacts ATP. Zn(2+)-binding residues include Cys-1381, Cys-1392, and Cys-1397. The segment at 1381-1397 (CSENNTANFKRCSPLVC) adopts a C4-type; degenerate zinc-finger fold. Residues 1504-1519 (SIATVVAVVSLVYVIY) lie within the membrane without spanning it. Topologically, residues 1520-2193 (KLFAGFQGAY…NLRRNWLELF (674 aa)) are cytoplasmic. Tyr-1529 is modified (O-(5'-phospho-RNA)-tyrosine). In terms of domain architecture, Peptidase C3 spans 1549 to 1727 (GPSLDFALSL…FCAGLKRSYF (179 aa)). Residues His-1588, Glu-1619, and Cys-1695 each act as for protease 3C activity in the active site. In terms of domain architecture, RdRp catalytic spans 1958 to 2073 (GSLFAFDYSG…ASYPFPIDCL (116 aa)). 2 residues coordinate Mg(2+): Asp-1964 and Asp-2060.

The protein belongs to the picornaviruses polyprotein family. Interacts with capsid protein VP1 and capsid protein VP3 to form heterotrimeric protomers. In terms of assembly, interacts with capsid protein VP0, and capsid protein VP3 to form heterotrimeric protomers. Five protomers subsequently associate to form pentamers which serve as building blocks for the capsid. Interacts with capsid protein VP2, capsid protein VP3 and capsid protein VP4 following cleavage of capsid protein VP0. Interacts with host SCARB2. Interacts with host ARF6; this interaction mediates viral endocytosis. As to quaternary structure, interacts with capsid protein VP1 and capsid protein VP3 in the mature capsid. Interacts with host SCARB2. Interacts with capsid protein VP0 and capsid protein VP1 to form heterotrimeric protomers. Five protomers subsequently associate to form pentamers which serve as building blocks for the capsid. Interacts with capsid protein VP4 in the mature capsid. Interacts with protein 2C; this interaction may be important for virion morphogenesis. In terms of assembly, interacts with capsid protein VP1 and capsid protein VP3. As to quaternary structure, homodimer. Interacts with host BAX; this interaction activates the mitochondrial apoptotic pathway. Interacts with host ILF2. In terms of assembly, homohexamer; forms a hexameric ring structure with 6-fold symmetry characteristic of AAA+ ATPases. Interacts (via N-terminus) with host RTN3 (via reticulon domain); this interaction is important for viral replication. Interacts with capsid protein VP3; this interaction may be important for virion morphogenesis. As to quaternary structure, interacts with protein 3CD. Homodimer. Interacts with host GBF1. Interacts (via GOLD domain) with host ACBD3 (via GOLD domain); this interaction allows the formation of a viral protein 3A/ACBD3 heterotetramer with a 2:2 stoichiometry, which will stimulate the recruitment of host PI4KB in order to synthesize PI4P at the viral RNA replication sites. In terms of assembly, interacts with RNA-directed RNA polymerase. As to quaternary structure, interacts with host IFIH1/MDA5; this interaction inhibits host IFIH1. Interacts with protein 3AB and with RNA-directed RNA polymerase. In terms of assembly, interacts with Viral protein genome-linked and with protein 3CD. It depends on Mg(2+) as a cofactor. Specific enzymatic cleavages in vivo by the viral proteases yield processing intermediates and the mature proteins. In terms of processing, myristoylation is required for the formation of pentamers during virus assembly. Further assembly of 12 pentamers and a molecule of genomic RNA generates the provirion. Post-translationally, during virion maturation, immature virions are rendered infectious following cleavage of VP0 into VP4 and VP2. This maturation seems to be an autocatalytic event triggered by the presence of RNA in the capsid and it is followed by a conformational change infectious virion. Myristoylation is required during RNA encapsidation and formation of the mature virus particle. In terms of processing, VPg is uridylylated by the polymerase into VPg-pUpU. This acts as a nucleotide-peptide primer for the genomic RNA replication.

It is found in the virion. The protein localises to the host cytoplasm. Its subcellular location is the host cytoplasmic vesicle membrane. It localises to the host nucleus. The enzyme catalyses a ribonucleoside 5'-triphosphate + H2O = a ribonucleoside 5'-diphosphate + phosphate + H(+). It catalyses the reaction Selective cleavage of Tyr-|-Gly bond in the picornavirus polyprotein.. The catalysed reaction is RNA(n) + a ribonucleoside 5'-triphosphate = RNA(n+1) + diphosphate. It carries out the reaction Selective cleavage of Gln-|-Gly bond in the poliovirus polyprotein. In other picornavirus reactions Glu may be substituted for Gln, and Ser or Thr for Gly.. Its activity is regulated as follows. Replication or transcription is subject to high level of random mutations by the nucleotide analog ribavirin. Its function is as follows. Forms an icosahedral capsid of pseudo T=3 symmetry with capsid proteins VP2 and VP3. The capsid is 300 Angstroms in diameter, composed of 60 copies of each capsid protein and enclosing the viral positive strand RNA genome. Capsid protein VP1 mainly forms the vertices of the capsid. Capsid protein VP1, together with VP2, interacts with host cell receptor SCARB2 to provide virion attachment to target host cells. This attachment induces virion internalization. After binding to its receptor, the capsid undergoes conformational changes. Capsid protein VP1 N-terminus (that contains an amphipathic alpha-helix) and capsid protein VP4 are externalized. Together, they shape a pore in the host membrane through which viral genome is translocated to host cell cytoplasm. Forms an icosahedral capsid of pseudo T=3 symmetry with capsid proteins VP2 and VP3. The capsid is 300 Angstroms in diameter, composed of 60 copies of each capsid protein and enclosing the viral positive strand RNA genome. Capsid protein VP2, together with VP1, interacts with host cell receptor SCARB2 to provide virion attachment to target host cells. Functionally, forms an icosahedral capsid of pseudo T=3 symmetry with capsid proteins VP2 and VP3. The capsid is 300 Angstroms in diameter, composed of 60 copies of each capsid protein and enclosing the viral positive strand RNA genome. In terms of biological role, lies on the inner surface of the capsid shell. After binding to the host receptor, the capsid undergoes conformational changes. Capsid protein VP4 is released, Capsid protein VP1 N-terminus is externalized, and together, they shape a pore in the host membrane through which the viral genome is translocated into the host cell cytoplasm. Its function is as follows. Component of immature procapsids, which is cleaved into capsid proteins VP4 and VP2 after maturation. Allows the capsid to remain inactive before the maturation step. Cysteine protease that cleaves viral polyprotein and specific host proteins. It is responsible for the autocatalytic cleavage between the P1 and P2 regions, which is the first cleavage occurring in the polyprotein. Also cleaves the host translation initiation factor EIF4G1, in order to shut down the capped cellular mRNA translation. Inhibits the host nucleus-cytoplasm protein and RNA trafficking by cleaving host members of the nuclear pores. Counteracts stress granule formation probably by antagonizing its assembly or promoting its dissassembly. Cleaves and inhibits host IFIH1/MDA5, thereby inhibiting the type-I IFN production and the establishment of the antiviral state. Cleaves and inhibits host MAVS, thereby inhibiting the type-I IFN production and the establishment of the antiviral state. Functionally, plays an essential role in the virus replication cycle by acting as a viroporin. Creates a pore in the host endoplasmic reticulum and as a consequence releases Ca2+ in the cytoplasm of infected cell. In turn, high levels of cytoplasmic calcium may trigger membrane trafficking and transport of viral ER-associated proteins to viroplasms, sites of viral genome replication. In terms of biological role, induces and associates with structural rearrangements of intracellular membranes. Displays RNA-binding, nucleotide binding and NTPase activities. May play a role in virion morphogenesis and viral RNA encapsidation by interacting with the capsid protein VP3. Its function is as follows. Localizes the viral replication complex to the surface of membranous vesicles. Together with protein 3CD binds the Cis-Active RNA Element (CRE) which is involved in RNA synthesis initiation. Acts as a cofactor to stimulate the activity of 3D polymerase, maybe through a nucleid acid chaperone activity. Localizes the viral replication complex to the surface of membranous vesicles. It inhibits host cell endoplasmic reticulum-to-Golgi apparatus transport and causes the disassembly of the Golgi complex, possibly through GBF1 interaction. This would result in depletion of MHC, trail receptors and IFN receptors at the host cell surface. Plays an essential role in viral RNA replication by recruiting ACBD3 and PI4KB at the viral replication sites, thereby allowing the formation of the rearranged membranous structures where viral replication takes place. Functionally, acts as a primer for viral RNA replication and remains covalently bound to viral genomic RNA. VPg is uridylylated prior to priming replication into VPg-pUpU. The oriI viral genomic sequence may act as a template for this. The VPg-pUpU is then used as primer on the genomic RNA poly(A) by the RNA-dependent RNA polymerase to replicate the viral genome. During genome replication, the VPg-RNA linkage is removed by the host TDP2, thereby accelerating replication. During the late stage of the replication cycle, host TDP2 is excluded from sites of viral RNA synthesis and encapsidation, allowing for the generation of progeny virions. In terms of biological role, involved in the viral replication complex and viral polypeptide maturation. It exhibits protease activity with a specificity and catalytic efficiency that is different from protease 3C. Protein 3CD lacks polymerase activity. Protein 3CD binds to the 5'UTR of the viral genome. Its function is as follows. Major viral protease that mediates proteolytic processing of the polyprotein. Cleaves host EIF5B, contributing to host translation shutoff. Also cleaves host PABPC1, contributing to host translation shutoff. Disassembles host cytoplasmic stress granules by cleaving host G3BP1, although this effect is less prononced than the inhibition induced by protease 2A. Cleaves host RIGI and thus contributes to the inhibition of type I interferon production. Cleaves host IRF7 and thus contributes to the inhibition of type I interferon production. Cleaves host HNRNPA1 thereby increasing the translation of apoptosis protease activating factor APAF1, leading to apoptosis of the host cell. Cleaves host NLRP1, triggers host N-glycine-mediated degradation of the autoinhibitory NLRP1 N-terminal fragment. Replicates the viral genomic RNA on the surface of intracellular membranes. May form linear arrays of subunits that propagate along a strong head-to-tail interaction called interface-I. Covalently attaches UMP to a tyrosine of VPg, which is used to prime RNA synthesis. The positive stranded RNA genome is first replicated at virus induced membranous vesicles, creating a dsRNA genomic replication form. This dsRNA is then used as template to synthesize positive stranded RNA genomes. ss(+)RNA genomes are either translated, replicated or encapsidated. This chain is Genome polyprotein, found in Human enterovirus 71 (strain 7423/MS/87) (EV71).